The chain runs to 533 residues: Capsid protein VP1 (533 aa).

Residues 333–353 form a disordered region; that stretch reads TIDLQQNPVPQTSSSTTDSPQ.

The protein belongs to the microviridae F protein family.

The protein localises to the virion. Its subcellular location is the host cytoplasm. In terms of biological role, assembles to form an icosahedral capsid with a T=1 symmetry. In Bdellovibrio bacteriovorus (Bacteriophage phiMH2K), this protein is Capsid protein VP1.